The primary structure comprises 103 residues: UPF0145 protein Dred_2155 (103 aa).

It belongs to the UPF0145 family.

In Desulforamulus reducens (strain ATCC BAA-1160 / DSM 100696 / MI-1) (Desulfotomaculum reducens), this protein is UPF0145 protein Dred_2155.